The following is a 430-amino-acid chain: Protein translocase subunit SecY (430 aa).

The next 10 helical transmembrane spans lie at 18 to 38 (IFFTLAMLVIFKIGTYIPAPG), 68 to 88 (FSIFAMGIMPYITASIVMQLL), 117 to 137 (FAIILAFIQSIGMAFQFNNYL), 147 to 167 (VMSYLLIAVVLTAGTAFLIWL), 174 to 194 (FGVGNGISLIIFAGILSTLPS), 217 to 237 (ILGLIVALILLTVGAIFVLEA), 270 to 290 (VIPVIFAMAFFLLPRTLTLFF), 308 to 328 (NIGMIIYVVLIIAFAYFYAFV), 368 to 388 (FVGSIFLAAIAILPIIATKFM), and 389 to 409 (GLPQSIQIGGTSLLIVIGVAI).

It belongs to the SecY/SEC61-alpha family. Component of the Sec protein translocase complex. Heterotrimer consisting of SecY, SecE and SecG subunits. The heterotrimers can form oligomers, although 1 heterotrimer is thought to be able to translocate proteins. Interacts with the ribosome. Interacts with SecDF, and other proteins may be involved. Interacts with SecA.

The protein resides in the cell membrane. Its function is as follows. The central subunit of the protein translocation channel SecYEG. Consists of two halves formed by TMs 1-5 and 6-10. These two domains form a lateral gate at the front which open onto the bilayer between TMs 2 and 7, and are clamped together by SecE at the back. The channel is closed by both a pore ring composed of hydrophobic SecY resides and a short helix (helix 2A) on the extracellular side of the membrane which forms a plug. The plug probably moves laterally to allow the channel to open. The ring and the pore may move independently. The polypeptide is Protein translocase subunit SecY (Staphylococcus epidermidis (strain ATCC 35984 / DSM 28319 / BCRC 17069 / CCUG 31568 / BM 3577 / RP62A)).